A 315-amino-acid chain; its full sequence is Isoaspartyl peptidase/L-asparaginase 1 (315 aa).

The residue at position 169 (serine 169) is a Phosphoserine. Threonine 183 functions as the Nucleophile in the catalytic mechanism. Residues arginine 211–aspartate 214 and threonine 233–glycine 236 contribute to the substrate site.

The protein belongs to the Ntn-hydrolase family. In terms of assembly, heterotetramer of two alpha and two beta chains arranged as a dimer of alpha/beta heterodimers. In terms of processing, cleaved into an alpha and beta chain by autocatalysis; this activates the enzyme. The N-terminal residue of the beta subunit is responsible for the nucleophile hydrolase activity.

It catalyses the reaction Cleavage of a beta-linked Asp residue from the N-terminus of a polypeptide.. In terms of biological role, acts in asparagine catabolism but also in the final steps of protein and degradation via hydrolysis of a range of isoaspartyl dipeptides. The affinity for Asn and at least 4 isoaspartyl dipeptides (L-beta-Asp-Ala, L-beta-Asp-Gly, L-beta-Asp-Leu, L-beta-Asp-Phe) is quite low, KM being greater than 4.0 mM. The enzyme is inactive on alpha-aspartyl dipeptides. This Arabidopsis thaliana (Mouse-ear cress) protein is Isoaspartyl peptidase/L-asparaginase 1.